The primary structure comprises 278 residues: Large ribosomal subunit protein uL2 (278 aa).

2 disordered regions span residues 1-58 (MAIR…GGGH) and 225-278 (VMNP…KNKR). Over residues 37–58 (LHGRGGRNAHGRITTRHKGGGH) the composition is skewed to basic residues. Positions 253-267 (PEGRTRKNKASDKLI) are enriched in basic and acidic residues. Residues 268–278 (VRRRRTGKNKR) are compositionally biased toward basic residues.

The protein belongs to the universal ribosomal protein uL2 family. Part of the 50S ribosomal subunit. Forms a bridge to the 30S subunit in the 70S ribosome.

One of the primary rRNA binding proteins. Required for association of the 30S and 50S subunits to form the 70S ribosome, for tRNA binding and peptide bond formation. It has been suggested to have peptidyltransferase activity; this is somewhat controversial. Makes several contacts with the 16S rRNA in the 70S ribosome. This chain is Large ribosomal subunit protein uL2, found in Rhodococcus opacus (strain B4).